The primary structure comprises 623 residues: Lethal(3)malignant brain tumor-like protein 4 (623 aa).

Residues 1-44 (MKQPNRKRKLNMDSKERLDQDGRLEQAEEEKKPKDSTTPLSHVP) are disordered. Positions 10 to 35 (LNMDSKERLDQDGRLEQAEEEKKPKD) are enriched in basic and acidic residues. MBT repeat units lie at residues 52–152 (WSWE…LHIP), 160–260 (FVWM…LIAP), and 269–364 (FSWT…LEVP). The CCHHC-type zinc finger occupies 370 to 414 (LKILPGQAVCPTPGCRGIGHIRGPRYSGHHSAFGCPYSDMNLKKE). The Zn(2+) site is built by Cys379, Cys384, His398, and Cys404. In terms of domain architecture, SAM spans 543-607 (WTVDEVAEFV…YNSILMFRHS (65 aa)).

It localises to the nucleus. Its function is as follows. Putative Polycomb group (PcG) protein. PcG proteins maintain the transcriptionally repressive state of genes, probably via a modification of chromatin, rendering it heritably changed in its expressibility. The sequence is that of Lethal(3)malignant brain tumor-like protein 4 (L3MBTL4) from Homo sapiens (Human).